The chain runs to 669 residues: Alpha-1,6-mannosylglycoprotein 6-beta-N-acetylglucosaminyltransferase (669 aa).

The Cytoplasmic portion of the chain corresponds to 1 to 7 (MRRRHRC). The chain crosses the membrane as a helical; Signal-anchor for type II membrane protein span at residues 8-28 (VALLFIFSAFITPLGFFYYTI). The Lumenal segment spans residues 29–669 (SNESKRYSEE…EQHAICKKCL (641 aa)). N-linked (GlcNAc...) asparagine glycans are attached at residues Asn30, Asn412, Asn437, and Asn626.

Belongs to the glycosyltransferase 18 family. In terms of tissue distribution, expressed in a complex subset of neurons in larvae and in the spermathecal and pharyngeal-intestinal valves and certain vulval cells of adults.

It is found in the golgi apparatus membrane. The enzyme catalyses N(4)-{beta-D-GlcNAc-(1-&gt;2)-[beta-D-GlcNAc-(1-&gt;4)]-alpha-D-Man-(1-&gt;3)-[beta-D-GlcNAc-(1-&gt;2)-alpha-D-Man-(1-&gt;6)]-beta-D-Man-(1-&gt;4)-beta-D-GlcNAc-(1-&gt;4)-beta-D-GlcNAc}-L-asparaginyl-[protein] + UDP-N-acetyl-alpha-D-glucosamine = N(4)-{beta-D-GlcNAc-(1-&gt;2)-[beta-D-GlcNAc-(1-&gt;4)]-alpha-D-Man-(1-&gt;3)-[beta-D-GlcNAc-(1-&gt;2)-[beta-D-GlcNAc-(1-&gt;6)]-alpha-D-Man-(1-&gt;6)]-beta-D-Man-(1-&gt;4)-beta-D-GlcNAc-(1-&gt;4)-beta-D-GlcNAc}-L-asparaginyl-[protein] + UDP + H(+). Its pathway is protein modification; protein glycosylation. Its function is as follows. Catalyzes the addition of N-acetylglucosamine (GlcNAc) in beta 1-6 linkage to the alpha-linked mannose of biantennary N-linked oligosaccharides. This is Alpha-1,6-mannosylglycoprotein 6-beta-N-acetylglucosaminyltransferase (gly-2) from Caenorhabditis elegans.